Reading from the N-terminus, the 313-residue chain is MAIATPTSAAPTPAPAGFTGTLTDKLREQFAEGLDGQTLRPDFTMEQPVHRYTAADHATWRTLYDRQEALLPGRACDEFLQGLSTLGMSREGVPSFDRLNETLMRATGWQIVAVPGLVPDEVFFEHLANRRFPASWWMRRPDQLDYLQEPDGFHDIFGHVPLLINPVFADYMQAYGQGGLKAARLGALDMLARLYWYTVEFGLIRTPAGLRIYGAGIVSSKSESVYALDSASPNRIGFDVHRIMRTRYRIDTFQKTYFVIDSFEQLFDATRPDFTPLYEALGTLPTFGAGDVVDGDAVLNAGTREGWADTADI.

Fe cation-binding residues include H154, H159, and E200.

It belongs to the biopterin-dependent aromatic amino acid hydroxylase family. The cofactor is Fe(2+).

The catalysed reaction is (6R)-L-erythro-5,6,7,8-tetrahydrobiopterin + L-phenylalanine + O2 = (4aS,6R)-4a-hydroxy-L-erythro-5,6,7,8-tetrahydrobiopterin + L-tyrosine. Its pathway is amino-acid degradation; L-phenylalanine degradation; acetoacetate and fumarate from L-phenylalanine: step 1/6. The chain is Phenylalanine-4-hydroxylase (phhA) from Ralstonia nicotianae (strain ATCC BAA-1114 / GMI1000) (Ralstonia solanacearum).